We begin with the raw amino-acid sequence, 357 residues long: Putative F-box/kelch-repeat protein At5g38680 (357 aa).

The F-box domain maps to 14–61; the sequence is NSNPSLPDALIISCIARVSRLYYPILSFVSKSFRSLLASPELYKERSL. 4 Kelch repeats span residues 131-175, 177-224, 226-267, and 268-313; these read NIYN…VLDG, IYVA…SKSL, IDEK…YCEI, and ENVL…GGKK.

The protein is Putative F-box/kelch-repeat protein At5g38680 of Arabidopsis thaliana (Mouse-ear cress).